Here is a 428-residue protein sequence, read N- to C-terminus: Dihydroorotase (428 aa).

2 residues coordinate Zn(2+): H61 and H63. Residues 63–65 (HLR) and N95 contribute to the substrate site. Residues D153, H180, and H233 each contribute to the Zn(2+) site. Position 279 (N279) interacts with substrate. D306 contacts Zn(2+). The active site involves D306. Residues H310 and 324 to 325 (FG) contribute to the substrate site.

This sequence belongs to the metallo-dependent hydrolases superfamily. DHOase family. Class I DHOase subfamily. Zn(2+) is required as a cofactor.

The catalysed reaction is (S)-dihydroorotate + H2O = N-carbamoyl-L-aspartate + H(+). It participates in pyrimidine metabolism; UMP biosynthesis via de novo pathway; (S)-dihydroorotate from bicarbonate: step 3/3. In terms of biological role, catalyzes the reversible cyclization of carbamoyl aspartate to dihydroorotate. The sequence is that of Dihydroorotase from Geobacillus kaustophilus (strain HTA426).